A 374-amino-acid chain; its full sequence is All-trans-retinol dehydrogenase [NAD(+)] ADH7 (374 aa).

Zn(2+)-binding residues include Cys47, His68, Cys98, Cys101, Cys104, Cys112, and Cys174. Residues 199–204 (GLGGVG), Asp223, Lys228, 292–294 (VGA), and Arg369 each bind NAD(+).

The protein belongs to the zinc-containing alcohol dehydrogenase family. Class-IV subfamily. In terms of assembly, homodimer. Requires Zn(2+) as cofactor. As to expression, high expression in the stomach mucosa. Lower expression in eye, thymus, skin and ovary. Very low expression in small intestine, liver and uterus.

Its subcellular location is the cytoplasm. It catalyses the reaction a primary alcohol + NAD(+) = an aldehyde + NADH + H(+). It carries out the reaction 10-hydroxydecanoate + NAD(+) = 10-oxodecanoate + NADH + H(+). The enzyme catalyses all-trans-retinol + NAD(+) = all-trans-retinal + NADH + H(+). The catalysed reaction is 9-cis-retinol + NAD(+) = 9-cis-retinal + NADH + H(+). It catalyses the reaction all-trans-3,4-didehydroretinol + NAD(+) = all-trans-3,4-didehydroretinal + NADH + H(+). It carries out the reaction all-trans-4-hydroxyretinol + NAD(+) = all-trans-4-hydroxyretinal + NADH + H(+). The enzyme catalyses all-trans-4-oxoretinol + NAD(+) = all-trans-4-oxoretinal + NADH + H(+). The catalysed reaction is 12-hydroxydodecanoate + NAD(+) = 12-oxododecanoate + NADH + H(+). It catalyses the reaction 16-hydroxyhexadecanoate + NAD(+) = 16-oxohexadecanoate + NADH + H(+). It carries out the reaction hexan-1-ol + NAD(+) = hexanal + NADH + H(+). The enzyme catalyses (E)-hex-2-en-1-ol + NAD(+) = (E)-hex-2-enal + NADH + H(+). The catalysed reaction is (E)-4-hydroxynon-2-en-1-ol + NAD(+) = (E)-4-hydroxynon-2-enal + NADH + H(+). Retinol oxidation is inhibited by the detergent Tween 80. Ethanol inhibits both all-trans-retinol and 9-cis-retinol oxidation. 13-cis-retinol is an effective competitive inhibitor of the 9-cis-retinol oxidation. All-trans-retinoic acid is a powerful inhibitor of all-trans-retinol oxidation. 13-cis-retinoic acid is a powerful inhibitor of all-trans-retinol oxidation. Cimetidine competitively inhibited ethanol oxidation. Catalyzes the NAD-dependent oxidation of all-trans-retinol, alcohol, aldehyde and omega-hydroxy fatty acids and their derivatives. Oxidizes preferentially all trans-retinol, all-trans-4-hydroxyretinol, 9-cis-retinol, 2-hexenol, and long chain omega-hydroxy fatty acids such as juniperic acid. In vitro can also catalyze the NADH-dependent reduction of all-trans-retinal and aldehydes and their derivatives. Reduces preferentially all trans-retinal, all-trans-4-oxoretinal and hexanal. Catalyzes in the oxidative direction with higher efficiency. Therefore may participate in retinoid metabolism, fatty acid omega-oxidation, and elimination of cytotoxic aldehydes produced by lipid peroxidation. This chain is All-trans-retinol dehydrogenase [NAD(+)] ADH7 (Adh7), found in Mus musculus (Mouse).